We begin with the raw amino-acid sequence, 213 residues long: Kynurenine formamidase (213 aa).

Tryptophan 18 is a binding site for substrate. Zn(2+) contacts are provided by histidine 48, histidine 52, and aspartate 54. Residue histidine 58 is the Proton donor/acceptor of the active site. Zn(2+) contacts are provided by histidine 160 and glutamate 172.

This sequence belongs to the Cyclase 1 superfamily. KynB family. As to quaternary structure, homodimer. Zn(2+) is required as a cofactor.

It carries out the reaction N-formyl-L-kynurenine + H2O = L-kynurenine + formate + H(+). It participates in amino-acid degradation; L-tryptophan degradation via kynurenine pathway; L-kynurenine from L-tryptophan: step 2/2. Catalyzes the hydrolysis of N-formyl-L-kynurenine to L-kynurenine, the second step in the kynurenine pathway of tryptophan degradation. This is Kynurenine formamidase from Burkholderia ambifaria (strain MC40-6).